Consider the following 86-residue polypeptide: Acyl carrier protein (86 aa).

The Carrier domain maps to 5 to 80 (EEILKKVQSI…EAVEFIIDKI (76 aa)). S40 bears the O-(pantetheine 4'-phosphoryl)serine mark.

The protein belongs to the acyl carrier protein (ACP) family. Post-translationally, 4'-phosphopantetheine is transferred from CoA to a specific serine of apo-ACP by AcpS. This modification is essential for activity because fatty acids are bound in thioester linkage to the sulfhydryl of the prosthetic group.

The protein resides in the plastid. It is found in the chloroplast. It functions in the pathway lipid metabolism; fatty acid biosynthesis. In terms of biological role, carrier of the growing fatty acid chain in fatty acid biosynthesis. This Cyanidium caldarium (Red alga) protein is Acyl carrier protein.